The following is a 326-amino-acid chain: NAD-dependent protein deacylase SIR5 (326 aa).

Residues 1-26 constitute a mitochondrion transit peptide; the sequence is MRLLRPTPRLSSIFSSKTATSNLRFF. The Deacetylase sirtuin-type domain maps to 28–324; it reads AMAPHNDVGA…IGKLETDKKE (297 aa). 53–72 contacts NAD(+); the sequence is GAGLSASSGLPTFRGAGGLW. The substrate site is built by tyrosine 97 and arginine 100. The active-site Proton acceptor is histidine 151. Residues cysteine 159, cysteine 162, cysteine 211, and cysteine 214 each coordinate Zn(2+).

This sequence belongs to the sirtuin family. Class I subfamily. As to quaternary structure, interacts with LAT1; the interaction is direct. Requires Zn(2+) as cofactor.

The protein localises to the mitochondrion. It localises to the cytoplasm. The protein resides in the cytosol. Its subcellular location is the nucleus. It is found in the chromosome. It catalyses the reaction N(6)-acetyl-L-lysyl-[protein] + NAD(+) + H2O = 2''-O-acetyl-ADP-D-ribose + nicotinamide + L-lysyl-[protein]. It carries out the reaction N(6)-(2E)-butenoyl-L-lysyl-[protein] + H2O = (2E)-2-butenoate + L-lysyl-[protein]. NAD-dependent protein-lysine deacylase that decrotonylates the PDC (pyruvate dehydrogenase complex) subunit LAT1 at 'Lys-148' to inhibit PDC activity and consequently ATP production. Also decrotonylates histone H3 crotonylated at 'Lys-18' (H3K18cr), to repress the expression of genes involved in aerobic respiration. May also act as a NAD-dependent deacetylase. Does not mediate desuccinylation, demalonylation, or deglutarylation of LAT1. The chain is NAD-dependent protein deacylase SIR5 from Fusarium oxysporum f. sp. lycopersici (strain 4287 / CBS 123668 / FGSC 9935 / NRRL 34936) (Fusarium vascular wilt of tomato).